Consider the following 306-residue polypeptide: D-alanine--D-alanine ligase (306 aa).

The 194-residue stretch at 107–300 folds into the ATP-grasp domain; it reads KAAYRTAGLP…FGQLCAWLVE (194 aa). 134–184 contributes to the ATP binding site; the sequence is IAPPYVVKPNNEGSSVGIYIVHEATNSPPQLSEEMPAQVMVEAYAPGREMT. Mg(2+)-binding residues include Asp-251, Glu-267, and Asn-269.

Belongs to the D-alanine--D-alanine ligase family. It depends on Mg(2+) as a cofactor. The cofactor is Mn(2+).

The protein resides in the cytoplasm. It carries out the reaction 2 D-alanine + ATP = D-alanyl-D-alanine + ADP + phosphate + H(+). It functions in the pathway cell wall biogenesis; peptidoglycan biosynthesis. Its function is as follows. Cell wall formation. The polypeptide is D-alanine--D-alanine ligase (Ruegeria sp. (strain TM1040) (Silicibacter sp.)).